The following is a 100-amino-acid chain: UPF0213 protein YhbQ (100 aa).

The GIY-YIG domain maps to 2 to 77 (TPWYLYLIRT…KQLTKRQKER (76 aa)).

The protein belongs to the UPF0213 family.

This is UPF0213 protein YhbQ from Escherichia coli O8 (strain IAI1).